Consider the following 252-residue polypeptide: Phosphoglycolate phosphatase (252 aa).

Asp-13 serves as the catalytic Nucleophile. Mg(2+) contacts are provided by Asp-13, Asp-15, and Asp-192.

Belongs to the HAD-like hydrolase superfamily. CbbY/CbbZ/Gph/YieH family. As to quaternary structure, monomer. It depends on Mg(2+) as a cofactor. Chloride serves as cofactor.

The catalysed reaction is 2-phosphoglycolate + H2O = glycolate + phosphate. It functions in the pathway organic acid metabolism; glycolate biosynthesis; glycolate from 2-phosphoglycolate: step 1/1. In terms of biological role, specifically catalyzes the dephosphorylation of 2-phosphoglycolate. Is involved in the dissimilation of the intracellular 2-phosphoglycolate formed during the DNA repair of 3'-phosphoglycolate ends, a major class of DNA lesions induced by oxidative stress. The polypeptide is Phosphoglycolate phosphatase (Shigella flexneri).